Consider the following 94-residue polypeptide: DNA gyrase subunit A (94 aa).

The region spanning 35–94 (LPDVRDGLKPVHRRILYGLNEQGMTPDKPYKKSARIVGDVMGKYHPHGDSSIYEAMVRMA) is the Topo IIA-type catalytic domain.

Belongs to the type II topoisomerase GyrA/ParC subunit family. As to quaternary structure, heterotetramer, composed of two GyrA and two GyrB chains. In the heterotetramer, GyrA contains the active site tyrosine that forms a transient covalent intermediate with DNA, while GyrB binds cofactors and catalyzes ATP hydrolysis.

It localises to the cytoplasm. The enzyme catalyses ATP-dependent breakage, passage and rejoining of double-stranded DNA.. Its function is as follows. A type II topoisomerase that negatively supercoils closed circular double-stranded (ds) DNA in an ATP-dependent manner to modulate DNA topology and maintain chromosomes in an underwound state. Negative supercoiling favors strand separation, and DNA replication, transcription, recombination and repair, all of which involve strand separation. Also able to catalyze the interconversion of other topological isomers of dsDNA rings, including catenanes and knotted rings. Type II topoisomerases break and join 2 DNA strands simultaneously in an ATP-dependent manner. This chain is DNA gyrase subunit A, found in Staphylococcus epidermidis.